The chain runs to 195 residues: 7-methyl-GTP pyrophosphatase (195 aa).

Catalysis depends on Asp-70, which acts as the Proton acceptor.

This sequence belongs to the Maf family. YceF subfamily. A divalent metal cation serves as cofactor.

The protein resides in the cytoplasm. It catalyses the reaction N(7)-methyl-GTP + H2O = N(7)-methyl-GMP + diphosphate + H(+). In terms of biological role, nucleoside triphosphate pyrophosphatase that hydrolyzes 7-methyl-GTP (m(7)GTP). May have a dual role in cell division arrest and in preventing the incorporation of modified nucleotides into cellular nucleic acids. This is 7-methyl-GTP pyrophosphatase from Shewanella sp. (strain MR-4).